The chain runs to 1417 residues: DNA-directed RNA polymerase subunit beta' (1417 aa).

Residues cysteine 68, cysteine 70, cysteine 83, and cysteine 86 each coordinate Zn(2+). Residues aspartate 458, aspartate 460, and aspartate 462 each contribute to the Mg(2+) site. Residues cysteine 811, cysteine 884, cysteine 891, and cysteine 894 each contribute to the Zn(2+) site.

It belongs to the RNA polymerase beta' chain family. As to quaternary structure, the RNAP catalytic core consists of 2 alpha, 1 beta, 1 beta' and 1 omega subunit. When a sigma factor is associated with the core the holoenzyme is formed, which can initiate transcription. Mg(2+) is required as a cofactor. Zn(2+) serves as cofactor.

The enzyme catalyses RNA(n) + a ribonucleoside 5'-triphosphate = RNA(n+1) + diphosphate. In terms of biological role, DNA-dependent RNA polymerase catalyzes the transcription of DNA into RNA using the four ribonucleoside triphosphates as substrates. This chain is DNA-directed RNA polymerase subunit beta', found in Francisella tularensis subsp. novicida (strain U112).